A 79-amino-acid chain; its full sequence is Acyl carrier protein (79 aa).

The 76-residue stretch at 2–77 (DNIEQRVKKI…QAIDYATAHV (76 aa)) folds into the Carrier domain. An O-(pantetheine 4'-phosphoryl)serine modification is found at serine 37.

The protein belongs to the acyl carrier protein (ACP) family. 4'-phosphopantetheine is transferred from CoA to a specific serine of apo-ACP by AcpS. This modification is essential for activity because fatty acids are bound in thioester linkage to the sulfhydryl of the prosthetic group.

Its subcellular location is the cytoplasm. Its pathway is lipid metabolism; fatty acid biosynthesis. In terms of biological role, carrier of the growing fatty acid chain in fatty acid biosynthesis. This Cupriavidus pinatubonensis (strain JMP 134 / LMG 1197) (Cupriavidus necator (strain JMP 134)) protein is Acyl carrier protein.